The primary structure comprises 226 residues: Endonuclease NucS (226 aa).

It belongs to the NucS endonuclease family.

It is found in the cytoplasm. In terms of biological role, cleaves both 3' and 5' ssDNA extremities of branched DNA structures. The protein is Endonuclease NucS of Mycobacterium tuberculosis (strain CDC 1551 / Oshkosh).